We begin with the raw amino-acid sequence, 662 residues long: Protein distal antenna (662 aa).

In terms of domain architecture, HTH psq-type spans Thr-21–Leu-72. A DNA-binding region (H-T-H motif) is located at residues Lys-48–Asn-68. Disordered stretches follow at residues Arg-265–Ser-299, Tyr-348–Thr-407, Pro-491–Val-537, and Gln-558–Cys-596. Residues Ser-349–Pro-391 show a composition bias toward low complexity. Residues Phe-511–Lys-520 show a composition bias toward polar residues. The span at Val-527–Glu-536 shows a compositional bias: acidic residues.

Homomers. Interacts with itself, danr, ey and dac to form a complex (or complexes) containing the RD factors.

It is found in the nucleus. Functionally, probable transcription factor with a role in the retinal determination (RD) network. Contributes to differentiation of antenna-specific characteristics. The polypeptide is Protein distal antenna (Culex quinquefasciatus (Southern house mosquito)).